Here is a 167-residue protein sequence, read N- to C-terminus: Glutathione peroxidase-like peroxiredoxin 1 (167 aa).

Cys36 functions as the Cysteine sulfenic acid (-SOH) intermediate in the catalytic mechanism. Cysteines 36 and 82 form a disulfide.

The protein belongs to the glutathione peroxidase family. In terms of assembly, monomer.

Its subcellular location is the peroxisome matrix. The protein localises to the mitochondrion outer membrane. The catalysed reaction is 2 glutathione + H2O2 = glutathione disulfide + 2 H2O. It catalyses the reaction a hydroperoxide + [thioredoxin]-dithiol = an alcohol + [thioredoxin]-disulfide + H2O. Glutathione peroxidase-like protein that protects cells from phospholipid hydroperoxides and nonphospholipid peroxides during oxidative stress. Has peroxidase activity using thioredoxin or glutathione as a reducing power. Involved in peroxisome formation. This chain is Glutathione peroxidase-like peroxiredoxin 1, found in Saccharomyces cerevisiae (strain ATCC 204508 / S288c) (Baker's yeast).